Here is a 1865-residue protein sequence, read N- to C-terminus: Transient receptor potential cation channel subfamily M member 7 (1865 aa).

Methionine 1 carries the N-acetylmethionine modification. The Cytoplasmic segment spans residues 1–850; that stretch reads MSQKSWIEST…ITRKFYAFYH (850 aa). Serine 101 is subject to Phosphoserine. The segment covering 544–555 has biased composition (low complexity); sequence NRRSGRNTSSST. Positions 544 to 575 are disordered; it reads NRRSGRNTSSSTPQLRKSHESFGNRADKKEKM. The segment covering 560-573 has biased composition (basic and acidic residues); it reads KSHESFGNRADKKE. A helical membrane pass occupies residues 851 to 876; sequence APIVKFWFNTLAYLGFLMLYTFVVLV. Topologically, residues 877–882 are extracellular; it reads QMEQLP. The chain crosses the membrane as a helical span at residues 883-904; that stretch reads SVQEWIVIAYIFTYAIEKVREI. The Cytoplasmic segment spans residues 905 to 923; the sequence is FMSEAGKVNQKIKVWFSDY. Residues 924 to 943 form a helical membrane-spanning segment; sequence FNISDTIAIISFFIGFGLRF. Over 944-956 the chain is Extracellular; the sequence is GAKWNFANAYDNH. A helical transmembrane segment spans residues 957 to 980; sequence VFVAGRLIYCLNIIFWYVRLLDFL. Topologically, residues 981-999 are cytoplasmic; it reads AVNQQAGPYVMMIGKMVAN. The helical transmembrane segment at 1000 to 1023 threads the bilayer; that stretch reads MFYIVVIMALVLLSFGVPRKAILY. The Extracellular portion of the chain corresponds to 1024 to 1025; that stretch reads PH. The segment at residues 1026 to 1066 is an intramembrane region (pore-forming); the sequence is EAPSWTLAKDIVFHPYWMIFGEVYAYEIDVCANDSVIPQIC. Residues 1067-1069 lie on the Extracellular side of the membrane; it reads GPG. The helical transmembrane segment at 1070–1098 threads the bilayer; it reads TWLTPFLQAVYLFVQYIIMVNLLIAFFNN. At 1099–1865 the chain is on the cytoplasmic side; the sequence is VYLQVKAISN…ESTNSVRLML (767 aa). Residues cysteine 1143, cysteine 1144, and cysteine 1146 are each lipidated (S-palmitoyl cysteine). Position 1163 is a phosphothreonine; by autocatalysis (threonine 1163). 2 positions are modified to phosphoserine; by autocatalysis: serine 1191 and serine 1193. A coiled-coil region spans residues 1198-1250; that stretch reads RVTFERVEQMCIQIKEVGDRVNYIKRSLQSLDSQIGHLQDLSALTVDTLKTLT. The residue at position 1224 (serine 1224) is a Phosphoserine. Serine 1255 and serine 1258 each carry phosphoserine; by autocatalysis. A Phosphothreonine; by autocatalysis modification is found at threonine 1265. Serine 1287 carries the post-translational modification Phosphoserine; by autocatalysis. Serine 1301 is modified (phosphoserine). Phosphoserine; by autocatalysis is present on serine 1358. Serine 1361 and serine 1386 each carry phosphoserine. The span at 1386–1398 shows a compositional bias: low complexity; that stretch reads SSSTSIPHLSSPP. The disordered stretch occupies residues 1386 to 1407; sequence SSSTSIPHLSSPPTKFFVSTPS. Phosphoserine; by autocatalysis is present on residues serine 1387 and serine 1390. 2 positions are modified to phosphoserine: serine 1395 and serine 1396. At serine 1404 the chain carries Phosphoserine; by autocatalysis. At threonine 1405 the chain carries Phosphothreonine; by autocatalysis. Serine 1407 carries the phosphoserine; by autocatalysis modification. Threonine 1435 is subject to Phosphothreonine; by autocatalysis. Serine 1446 bears the Phosphoserine; by autocatalysis mark. Threonine 1455 carries the post-translational modification Phosphothreonine; by autocatalysis. Residues serine 1456 and serine 1463 each carry the phosphoserine; by autocatalysis modification. Threonine 1467 carries the post-translational modification Phosphothreonine. The residue at position 1468 (serine 1468) is a Phosphoserine; by autocatalysis. A Phosphothreonine; by autocatalysis modification is found at threonine 1471. Residues serine 1476 and serine 1477 each carry the phosphoserine; by autocatalysis modification. The residue at position 1482 (threonine 1482) is a Phosphothreonine; by autocatalysis. The disordered stretch occupies residues 1492–1511; that stretch reads HSKQAEKISRRPSTEDTHEV. The residue at position 1493 (serine 1493) is a Phosphoserine; by autocatalysis. The segment covering 1494–1511 has biased composition (basic and acidic residues); that stretch reads KQAEKISRRPSTEDTHEV. Position 1500 is a phosphoserine (serine 1500). At serine 1504 the chain carries Phosphoserine; by autocatalysis. At threonine 1508 the chain carries Phosphothreonine; by autocatalysis. A phosphoserine; by autocatalysis mark is found at serine 1513, serine 1527, and serine 1533. Positions 1524-1543 are disordered; that stretch reads DRPSNREMPSEEGTLNGLTS. Residues threonine 1537 and threonine 1542 each carry the phosphothreonine; by autocatalysis modification. Serine 1543 is subject to Phosphoserine; by autocatalysis. Position 1551 is a phosphothreonine; by autocatalysis (threonine 1551). Phosphoserine; by autocatalysis occurs at positions 1567 and 1569. Threonine 1583 carries the post-translational modification Phosphothreonine; by autocatalysis. The region spanning 1594-1824 is the Alpha-type protein kinase domain; that stretch reads ILNNSMSSWS…CCRKLKLPDL (231 aa). Phosphoserine; by autocatalysis is present on residues serine 1598 and serine 1615. 5 residues coordinate ADP: glycine 1621, glycine 1622, leucine 1623, arginine 1624, and lysine 1648. A Phosphoserine; by autocatalysis modification is found at serine 1660. Residue threonine 1685 is modified to Phosphothreonine; by autocatalysis. Glutamate 1720, glutamate 1721, and methionine 1723 together coordinate ADP. Residue histidine 1753 participates in Zn(2+) binding. Catalysis depends on aspartate 1767, which acts as the Proton acceptor. Aspartate 1777 contributes to the ADP binding site. Serine 1779 is modified (phosphoserine; by autocatalysis). Zn(2+) is bound by residues histidine 1810, cysteine 1812, and cysteine 1816. A Phosphothreonine; by autocatalysis modification is found at threonine 1830. Residues 1836 to 1865 are disordered; that stretch reads FPQDEPSDLNLQPGNSTKESESTNSVRLML. Positions 1844-1865 are enriched in polar residues; the sequence is LNLQPGNSTKESESTNSVRLML. Phosphoserine is present on serine 1851. Residue serine 1860 is modified to Phosphoserine; by autocatalysis.

The protein in the C-terminal section; belongs to the protein kinase superfamily. Alpha-type protein kinase family. ALPK subfamily. This sequence in the N-terminal section; belongs to the transient receptor (TC 1.A.4) family. LTrpC subfamily. TRPM7 sub-subfamily. Homotetramer. Interacts with PLCB1. Forms heteromers with TRPM6; heteromeric channels are functionally different from the homomeric channels. Zn(2+) serves as cofactor. In terms of processing, palmitoylated; palmitoylation at Cys-1143, Cys-1144 and Cys-1146 promotes TRPM7 trafficking from the Golgi to the surface membrane. Autophosphorylated; autophosphorylation of C-terminus regulates TRPM7 kinase activity towards its substrates. Post-translationally, the C-terminal kinase domain can be cleaved from the channel segment in a cell-type-specific fashion. TRPM7 is cleaved by caspase-8, dissociating the kinase from the ion-conducting pore. The cleaved kinase fragments (M7CKs) can translocate to the cell nucleus and binds chromatin-remodeling complex proteins in a Zn(2+)-dependent manner to ultimately phosphorylate specific Ser/Thr residues of histones.

It is found in the cell membrane. It localises to the cytoplasmic vesicle membrane. The protein localises to the nucleus. It carries out the reaction L-seryl-[protein] + ATP = O-phospho-L-seryl-[protein] + ADP + H(+). The catalysed reaction is L-threonyl-[protein] + ATP = O-phospho-L-threonyl-[protein] + ADP + H(+). It catalyses the reaction Mg(2+)(in) = Mg(2+)(out). The enzyme catalyses Ca(2+)(in) = Ca(2+)(out). It carries out the reaction Zn(2+)(in) = Zn(2+)(out). With respect to regulation, channel displays constitutive activity. Channel activity is negatively regulated by cytosolic Mg(2+) and Mg-ATP. Channel activity is negatively regulated by low intracellular pH. Resting free cytosolic Mg(2+) and Mg-ATP concentrations seem to be sufficient to block native TRPM7 channel activity. TRPM7 channel activity is highly dependent on membrane levels of phosphatidylinositol 4,5 bisphosphate (PIP2). PIP2 hydrolysis negatively regulates TRPM7 channel activity. TRPM7 kinase activity does not affect channel activity. The kinase activity is controlled through the autophosphorylation of a serine/threonine-rich region located N-terminal to the catalytic domain. In terms of biological role, bifunctional protein that combines an ion channel with an intrinsic kinase domain, enabling it to modulate cellular functions either by conducting ions through the pore or by phosphorylating downstream proteins via its kinase domain. The channel is highly permeable to divalent cations, specifically calcium (Ca2+), magnesium (Mg2+) and zinc (Zn2+) and mediates their influx. Controls a wide range of biological processes such as Ca2(+), Mg(2+) and Zn(2+) homeostasis, vesicular Zn(2+) release channel and intracellular Ca(2+) signaling, embryonic development, immune responses, cell motility, proliferation and differentiation. The C-terminal alpha-kinase domain autophosphorylates cytoplasmic residues of TRPM7. In vivo, TRPM7 phosphorylates SMAD2, suggesting that TRPM7 kinase may play a role in activating SMAD signaling pathways. In vitro, TRPM7 kinase phosphorylates ANXA1 (annexin A1), myosin II isoforms and a variety of proteins with diverse cellular functions. Its function is as follows. The cleaved channel exhibits substantially higher current and potentiates Fas receptor signaling. Functionally, the C-terminal kinase domain can be cleaved from the channel segment in a cell-type-specific fashion. In immune cells, the TRPM7 kinase domain is clipped from the channel domain by caspases in response to Fas-receptor stimulation. The cleaved kinase fragments can translocate to the nucleus, and bind chromatin-remodeling complex proteins in a Zn(2+)-dependent manner to ultimately phosphorylate specific Ser/Thr residues of histones known to be functionally important for cell differentiation and embryonic development. In Homo sapiens (Human), this protein is Transient receptor potential cation channel subfamily M member 7 (TRPM7).